A 516-amino-acid chain; its full sequence is Methionine--tRNA ligase (516 aa).

The 'HIGH' region motif lies at 13-23 (FYPNGKPHIGH). The 'KMSKS' region signature appears at 299 to 303 (KMSKS). K302 is a binding site for ATP.

Belongs to the class-I aminoacyl-tRNA synthetase family. MetG type 2B subfamily. Monomer.

It localises to the cytoplasm. It catalyses the reaction tRNA(Met) + L-methionine + ATP = L-methionyl-tRNA(Met) + AMP + diphosphate. In terms of biological role, is required not only for elongation of protein synthesis but also for the initiation of all mRNA translation through initiator tRNA(fMet) aminoacylation. This is Methionine--tRNA ligase from Mesorhizobium japonicum (strain LMG 29417 / CECT 9101 / MAFF 303099) (Mesorhizobium loti (strain MAFF 303099)).